The primary structure comprises 267 residues: Small ribosomal subunit protein uS2 (267 aa).

The segment at 225-267 is disordered; it reads LREQELEGEEQEEAAPATEEEKKELIEEAVAEGEAEETEEEEK. Residues 251–267 are compositionally biased toward acidic residues; sequence EEAVAEGEAEETEEEEK.

This sequence belongs to the universal ribosomal protein uS2 family.

The polypeptide is Small ribosomal subunit protein uS2 (Nitratiruptor sp. (strain SB155-2)).